We begin with the raw amino-acid sequence, 676 residues long: E3 ubiquitin-protein ligase ICP0 (676 aa).

The RING-type zinc-finger motif lies at 13–52 (CCICLDAITGAARALPCLHAFCLACIRRWLEGRPTCPLCK). 3 disordered regions span residues 101-153 (DLTA…GGRA), 266-517 (HLIP…AGAQ), and 555-676 (AAIS…AWRQ). Over residues 123–153 (EAGGGAGGAEEAGEARGAGAGRAAGAAGGRA) the composition is skewed to gly residues. Acidic residues predominate over residues 286 to 303 (SDSDSEGSEDDSWSESEE). A compositionally biased stretch (low complexity) spans 304–314 (SSSGLSTSDLT). The segment covering 315-328 (AIDDTETEPETDAE) has biased composition (acidic residues). The span at 351–361 (YVSTRGRQTPA) shows a compositional bias: polar residues. Composition is skewed to low complexity over residues 375–388 (GRAAAVSAPPSSRS) and 397–411 (LPAAPRAAPAAQARA). Residues 422–439 (GAGLGVAAGETAGWGAGS) show a composition bias toward gly residues. Basic and acidic residues predominate over residues 440-450 (EEGRGERRARL). The segment covering 474 to 484 (TPAPAPAPAPA) has biased composition (pro residues). The segment covering 555–597 (AAISTRAPTPSPAGRAPAADPRRAGAPALAGAARAEVGRNGNP) has biased composition (low complexity).

Belongs to the simplexviruses ICp0 family. Auto-ubiquitinated. In terms of processing, transactivation activity is possibly regulated through phosphorylation by casein kinase II.

It catalyses the reaction S-ubiquitinyl-[E2 ubiquitin-conjugating enzyme]-L-cysteine + [acceptor protein]-L-lysine = [E2 ubiquitin-conjugating enzyme]-L-cysteine + N(6)-ubiquitinyl-[acceptor protein]-L-lysine.. In terms of biological role, evades nuclear antiviral defenses triggered by dsDNA viruses. Acts during the initial stages of lytic infection and the reactivation of latent viral genome. Prevents the antiviral effect of nuclear bodies by degrading host PML and SP100. This Bovine herpesvirus 1.1 (strain Cooper) (BoHV-1) protein is E3 ubiquitin-protein ligase ICP0 (BICP0).